Here is a 217-residue protein sequence, read N- to C-terminus: Probable GTP-binding protein EngB (217 aa).

The EngB-type G domain maps to 31–205; the sequence is VGVEIAFAGR…LAILDAWCHP (175 aa). GTP-binding positions include 39–46, 66–70, 84–87, 151–154, and 184–186; these read GRSNAGKS, GRTQL, DLPG, TKAD, and FSA. Positions 46 and 68 each coordinate Mg(2+).

It belongs to the TRAFAC class TrmE-Era-EngA-EngB-Septin-like GTPase superfamily. EngB GTPase family. The cofactor is Mg(2+).

In terms of biological role, necessary for normal cell division and for the maintenance of normal septation. The sequence is that of Probable GTP-binding protein EngB from Shewanella amazonensis (strain ATCC BAA-1098 / SB2B).